The following is a 211-amino-acid chain: MFITIEGMDGSGKTTALQRVKQYLEDLNYKVVMTREPGGLPLSEKIRELILNKDGVGMEPWTEALLFIAARKEHLEKVIKPYLKKGYIVISDRFMDSTTAYQGGARGLGVDYLNELQKNILEGFLPDLTLYFELSFEDAEKRLSARPEEKNRLDEEGRKFKEAVKLAFEELVVKEPNRITVIDASKSPEEVFEETKKVILEKIELWKKEKR.

Position 7–14 (7–14) interacts with ATP; the sequence is GMDGSGKT.

This sequence belongs to the thymidylate kinase family.

The catalysed reaction is dTMP + ATP = dTDP + ADP. Phosphorylation of dTMP to form dTDP in both de novo and salvage pathways of dTTP synthesis. The polypeptide is Thymidylate kinase (Mesoplasma florum (strain ATCC 33453 / NBRC 100688 / NCTC 11704 / L1) (Acholeplasma florum)).